A 625-amino-acid chain; its full sequence is Glutamine--fructose-6-phosphate aminotransferase [isomerizing] (625 aa).

The active-site Nucleophile; for GATase activity is C2. A Glutamine amidotransferase type-2 domain is found at 2 to 229 (CGLVGYVGQR…QDQAVVITAD (228 aa)). SIS domains follow at residues 298-437 (SDQE…ARGT) and 470-615 (LAYR…VDKP). Residue K620 is the For Fru-6P isomerization activity of the active site.

Homodimer.

The protein resides in the cytoplasm. It catalyses the reaction D-fructose 6-phosphate + L-glutamine = D-glucosamine 6-phosphate + L-glutamate. In terms of biological role, catalyzes the first step in hexosamine metabolism, converting fructose-6P into glucosamine-6P using glutamine as a nitrogen source. This chain is Glutamine--fructose-6-phosphate aminotransferase [isomerizing], found in Mycobacterium leprae (strain TN).